A 172-amino-acid chain; its full sequence is Ribosome maturation factor RimM (172 aa).

In terms of domain architecture, PRC barrel spans 94–167; the sequence is EGSYYYKDII…VAHVIVPEGL (74 aa).

Belongs to the RimM family. Binds ribosomal protein uS19.

It localises to the cytoplasm. Functionally, an accessory protein needed during the final step in the assembly of 30S ribosomal subunit, possibly for assembly of the head region. Essential for efficient processing of 16S rRNA. May be needed both before and after RbfA during the maturation of 16S rRNA. It has affinity for free ribosomal 30S subunits but not for 70S ribosomes. This Lacticaseibacillus paracasei (strain ATCC 334 / BCRC 17002 / CCUG 31169 / CIP 107868 / KCTC 3260 / NRRL B-441) (Lactobacillus paracasei) protein is Ribosome maturation factor RimM.